The primary structure comprises 312 residues: Ribosomal protein L11 methyltransferase (312 aa).

Positions 163, 184, 206, and 248 each coordinate S-adenosyl-L-methionine.

Belongs to the methyltransferase superfamily. PrmA family.

The protein localises to the cytoplasm. It carries out the reaction L-lysyl-[protein] + 3 S-adenosyl-L-methionine = N(6),N(6),N(6)-trimethyl-L-lysyl-[protein] + 3 S-adenosyl-L-homocysteine + 3 H(+). Methylates ribosomal protein L11. The protein is Ribosomal protein L11 methyltransferase of Clostridium botulinum (strain Hall / ATCC 3502 / NCTC 13319 / Type A).